We begin with the raw amino-acid sequence, 216 residues long: Urease accessory protein UreG (216 aa).

Gly25–Thr32 provides a ligand contact to GTP.

This sequence belongs to the SIMIBI class G3E GTPase family. UreG subfamily. As to quaternary structure, homodimer. UreD, UreF and UreG form a complex that acts as a GTP-hydrolysis-dependent molecular chaperone, activating the urease apoprotein by helping to assemble the nickel containing metallocenter of UreC. The UreE protein probably delivers the nickel.

It is found in the cytoplasm. Its function is as follows. Facilitates the functional incorporation of the urease nickel metallocenter. This process requires GTP hydrolysis, probably effectuated by UreG. The chain is Urease accessory protein UreG from Burkholderia mallei (strain NCTC 10247).